The sequence spans 523 residues: Rho guanine nucleotide exchange factor 8 (523 aa).

The segment covering 44 to 57 (VESNTPESQNSDSF) has biased composition (polar residues). Disordered stretches follow at residues 44-83 (VESN…ERQQ) and 442-523 (ETSD…KDRH). Positions 76 to 440 (GKRSERQQAD…TLALKQTLLA (365 aa)) constitute a PRONE domain. Positions 465–475 (EAEKHDPHSKT) are enriched in basic and acidic residues.

In terms of assembly, homodimer. The homodimer interacts with ARAC5/ROP4. Interacts with ARAC11/ROP1 and ARAC10/ROP11. Interacts with PRK6. Expressed in pollen grains and pollen tubes.

The protein localises to the cell membrane. Guanine-nucleotide exchange factor (GEF) that acts as an activator of Rop (Rho of plants) GTPases by promoting the exchange of GDP for GTP. Active as homodimer. The sequence is that of Rho guanine nucleotide exchange factor 8 from Arabidopsis thaliana (Mouse-ear cress).